The primary structure comprises 296 residues: Acetylglutamate kinase (296 aa).

Residues 69–70 (GG), R91, and N192 each bind substrate.

The protein belongs to the acetylglutamate kinase family. ArgB subfamily.

It localises to the cytoplasm. The catalysed reaction is N-acetyl-L-glutamate + ATP = N-acetyl-L-glutamyl 5-phosphate + ADP. The protein operates within amino-acid biosynthesis; L-arginine biosynthesis; N(2)-acetyl-L-ornithine from L-glutamate: step 2/4. Its function is as follows. Catalyzes the ATP-dependent phosphorylation of N-acetyl-L-glutamate. This chain is Acetylglutamate kinase, found in Ruthia magnifica subsp. Calyptogena magnifica.